The primary structure comprises 369 residues: MKNHKSLAILIPMLFAGSTAVNAIEIFNKNGNKLELYGSINPNHNFSNEFLSTKISSKEDNTNAILGLSGKIKITDKLSSYAQIEYKNNFFMPEDLMNKQQPNTVRLGYAGLKYGNLGSIDYGRNYGVIHDAQSLTDHVPYINKKSIFAYNDNYMVGRNHSLLTYRNNNVFGLVDGISFALQYQDEIKNRDLNKGKSSSGWGASLKYESDSGLTAVGSCFTSERMISSNKKDLKNTSVDSYGLGFKYDANNVYVAAFYGSARNLMPYNMHISDSFINETQNIEAIAEYSFDSGFHPSLSYLDSKGQNSNSPKKELDLAKQINISTRYEFNKNVSTYMNYKINLLKENDFISQNQIPTDNTIGAGVVYQF.

Positions 1-23 are cleaved as a signal peptide; it reads MKNHKSLAILIPMLFAGSTAVNA.

The protein belongs to the Gram-negative porin family. In terms of assembly, homotrimer.

The protein resides in the cell outer membrane. In terms of biological role, forms pores that allow passive diffusion of small molecules across the membrane. The protein is Porin-like protein BUsg_347 of Buchnera aphidicola subsp. Schizaphis graminum (strain Sg).